A 570-amino-acid chain; its full sequence is Urease subunit alpha (570 aa).

Residues Gly133–Phe570 enclose the Urease domain. Ni(2+) contacts are provided by His138, His140, and Lys221. Residue Lys221 is modified to N6-carboxylysine. His223 contacts substrate. The Ni(2+) site is built by His250 and His276. The active-site Proton donor is the His324. Asp364 serves as a coordination point for Ni(2+).

It belongs to the metallo-dependent hydrolases superfamily. Urease alpha subunit family. In terms of assembly, heterotrimer of UreA (gamma), UreB (beta) and UreC (alpha) subunits. Three heterotrimers associate to form the active enzyme. Requires Ni cation as cofactor. Carboxylation allows a single lysine to coordinate two nickel ions.

The protein resides in the cytoplasm. The enzyme catalyses urea + 2 H2O + H(+) = hydrogencarbonate + 2 NH4(+). Its pathway is nitrogen metabolism; urea degradation; CO(2) and NH(3) from urea (urease route): step 1/1. The sequence is that of Urease subunit alpha from Cytophaga hutchinsonii (strain ATCC 33406 / DSM 1761 / CIP 103989 / NBRC 15051 / NCIMB 9469 / D465).